The chain runs to 285 residues: Release factor glutamine methyltransferase (285 aa).

Residues 124–128 (GTGSG), D147, and N190 each bind S-adenosyl-L-methionine. 190–193 (NPPY) is a binding site for substrate.

The protein belongs to the protein N5-glutamine methyltransferase family. PrmC subfamily.

The catalysed reaction is L-glutaminyl-[peptide chain release factor] + S-adenosyl-L-methionine = N(5)-methyl-L-glutaminyl-[peptide chain release factor] + S-adenosyl-L-homocysteine + H(+). Functionally, methylates the class 1 translation termination release factors RF1/PrfA and RF2/PrfB on the glutamine residue of the universally conserved GGQ motif. In Flavobacterium psychrophilum (strain ATCC 49511 / DSM 21280 / CIP 103535 / JIP02/86), this protein is Release factor glutamine methyltransferase.